A 75-amino-acid polypeptide reads, in one-letter code: Small ribosomal subunit protein bS18 (75 aa).

This sequence belongs to the bacterial ribosomal protein bS18 family. As to quaternary structure, part of the 30S ribosomal subunit. Forms a tight heterodimer with protein bS6.

Its function is as follows. Binds as a heterodimer with protein bS6 to the central domain of the 16S rRNA, where it helps stabilize the platform of the 30S subunit. The polypeptide is Small ribosomal subunit protein bS18 (Idiomarina loihiensis (strain ATCC BAA-735 / DSM 15497 / L2-TR)).